The following is a 151-amino-acid chain: Deoxyuridine 5'-triphosphate nucleotidohydrolase (151 aa).

Residues 70-72, Asn-83, 87-89, and Met-97 contribute to the substrate site; these read RSG and LID.

Belongs to the dUTPase family. It depends on Mg(2+) as a cofactor.

It carries out the reaction dUTP + H2O = dUMP + diphosphate + H(+). It functions in the pathway pyrimidine metabolism; dUMP biosynthesis; dUMP from dCTP (dUTP route): step 2/2. In terms of biological role, this enzyme is involved in nucleotide metabolism: it produces dUMP, the immediate precursor of thymidine nucleotides and it decreases the intracellular concentration of dUTP so that uracil cannot be incorporated into DNA. In Histophilus somni (strain 129Pt) (Haemophilus somnus), this protein is Deoxyuridine 5'-triphosphate nucleotidohydrolase.